A 336-amino-acid chain; its full sequence is Probable allantoicase (336 aa).

This sequence belongs to the allantoicase family.

It catalyses the reaction allantoate + H2O = (S)-ureidoglycolate + urea. It functions in the pathway nitrogen metabolism; (S)-allantoin degradation; (S)-ureidoglycolate from allantoate (aminidohydrolase route): step 1/1. The protein is Probable allantoicase of Acinetobacter baumannii (strain ACICU).